The following is a 494-amino-acid chain: Guanosine-5'-triphosphate,3'-diphosphate pyrophosphatase (494 aa).

This sequence belongs to the GppA/Ppx family. GppA subfamily.

The catalysed reaction is guanosine 3'-diphosphate 5'-triphosphate + H2O = guanosine 3',5'-bis(diphosphate) + phosphate + H(+). Its pathway is purine metabolism; ppGpp biosynthesis; ppGpp from GTP: step 2/2. In terms of biological role, catalyzes the conversion of pppGpp to ppGpp. Guanosine pentaphosphate (pppGpp) is a cytoplasmic signaling molecule which together with ppGpp controls the 'stringent response', an adaptive process that allows bacteria to respond to amino acid starvation, resulting in the coordinated regulation of numerous cellular activities. In Escherichia coli (strain 55989 / EAEC), this protein is Guanosine-5'-triphosphate,3'-diphosphate pyrophosphatase.